The chain runs to 365 residues: Aminomethyltransferase (365 aa).

This sequence belongs to the GcvT family. In terms of assembly, the glycine cleavage system is composed of four proteins: P, T, L and H.

The enzyme catalyses N(6)-[(R)-S(8)-aminomethyldihydrolipoyl]-L-lysyl-[protein] + (6S)-5,6,7,8-tetrahydrofolate = N(6)-[(R)-dihydrolipoyl]-L-lysyl-[protein] + (6R)-5,10-methylene-5,6,7,8-tetrahydrofolate + NH4(+). Its function is as follows. The glycine cleavage system catalyzes the degradation of glycine. The chain is Aminomethyltransferase from Frankia alni (strain DSM 45986 / CECT 9034 / ACN14a).